Consider the following 235-residue polypeptide: 6-carboxyhexanoate--CoA ligase (235 aa).

Belongs to the BioW family. In terms of assembly, homodimer. Mg(2+) serves as cofactor.

The enzyme catalyses heptanedioate + ATP + CoA = 6-carboxyhexanoyl-CoA + AMP + diphosphate. Its pathway is metabolic intermediate metabolism; pimeloyl-CoA biosynthesis; pimeloyl-CoA from pimelate: step 1/1. In terms of biological role, catalyzes the transformation of pimelate into pimeloyl-CoA with concomitant hydrolysis of ATP to AMP. The chain is 6-carboxyhexanoate--CoA ligase from Desulfovibrio desulfuricans (strain ATCC 27774 / DSM 6949 / MB).